Consider the following 579-residue polypeptide: Zinc finger-containing ubiquitin peptidase 1 (579 aa).

The segment at 2-25 (LSCDICGETVSSEPDMKAHLLIVH) adopts a C2H2-type 1 zinc-finger fold. The C2H2-type 2; atypical zinc-finger motif lies at 30–53 (VICPFCKLSGVNYDEMCFHIETAH). 2 consecutive C2H2-type zinc fingers follow at residues 155-178 (PECP…KTKH) and 194-216 (YDCP…VDLH). Residues 227-249 (NRVQCSRDLELAQQLQQEEDRKR) form an MIU region. A zUBD/ZHA region spans residues 250-275 (RSEESRQEMEEFQKLQRQYGLDNSGG). K263 is subject to N6-acetyllysine. C361 acts as the Nucleophile in catalysis. The active-site Proton acceptor is H492. D513 is an active-site residue.

This sequence belongs to the peptidase C78 family. ZUFSP subfamily. In terms of assembly, interacts with RPA1 and RPA2.

It localises to the cytoplasm. The protein localises to the nucleus. The catalysed reaction is Thiol-dependent hydrolysis of ester, thioester, amide, peptide and isopeptide bonds formed by the C-terminal Gly of ubiquitin (a 76-residue protein attached to proteins as an intracellular targeting signal).. Deubiquitinase with endodeubiquitinase activity that specifically interacts with and cleaves 'Lys-63'-linked long polyubiquitin chains. Shows only weak activity against 'Lys-11' and 'Lys-48'-linked chains. Plays an important role in genome stability pathways, functioning to prevent spontaneous DNA damage and also promote cellular survival in response to exogenous DNA damage. Modulates the ubiquitination status of replication protein A (RPA) complex proteins in response to replication stress. This is Zinc finger-containing ubiquitin peptidase 1 from Bos taurus (Bovine).